The primary structure comprises 175 residues: 2-oxo-4-hydroxy-4-carboxy-5-ureidoimidazoline decarboxylase (175 aa).

The Proton donor role is filled by His67. Residues Pro68, 84–88 (SRGEQ), and 119–123 (FVICA) contribute to the substrate site. Positions 173 to 175 (TKL) match the Microbody targeting signal motif.

It belongs to the OHCU decarboxylase family. In terms of assembly, homodimer.

The protein resides in the peroxisome. It catalyses the reaction 5-hydroxy-2-oxo-4-ureido-2,5-dihydro-1H-imidazole-5-carboxylate + H(+) = (S)-allantoin + CO2. It functions in the pathway purine metabolism; urate degradation; (S)-allantoin from urate: step 3/3. In terms of biological role, catalyzes the stereoselective decarboxylation of 2-oxo-4-hydroxy-4-carboxy-5-ureidoimidazoline (OHCU) to (S)-allantoin. This is 2-oxo-4-hydroxy-4-carboxy-5-ureidoimidazoline decarboxylase (urad) from Amia calva (Bowfin).